We begin with the raw amino-acid sequence, 1709 residues long: Acrosomal protein KIAA1210 (1709 aa).

Disordered stretches follow at residues 207-226 (PVRE…GSKA), 239-275 (PERS…SKVP), 451-663 (PNLD…AEKT), 763-973 (PPRS…MAVE), 1211-1382 (LKRG…SVNA), 1408-1516 (TKKF…GRGH), 1539-1571 (ADKQ…QSDY), and 1589-1653 (FKAH…KSVG). Residues 257–272 (PQQRSHISRTLPKPRS) show a composition bias toward basic residues. The span at 473–490 (EEEKSITKPKEINEKKLG) shows a compositional bias: basic and acidic residues. Polar residues-rich tracts occupy residues 494 to 505 (ADSSSQKQNNKT) and 514 to 527 (DQAP…SQGY). Residues 595–608 (EQPTTSQPETTTPQ) are compositionally biased toward low complexity. Positions 651–663 (PYHEDAASGAEKT) are enriched in basic and acidic residues. Acidic residues predominate over residues 777–794 (EEVSSDSENIPEEGDGSE). Polar residues-rich tracts occupy residues 886–941 (KNQQ…QSDS), 1288–1299 (FKEQLSPRQLSQ), 1332–1350 (HSSQ…SSKG), 1366–1376 (PSSSPFQQQVH), and 1457–1469 (DGNN…LSNQ). Residues 1502–1513 (SVPSGPISSSVG) show a composition bias toward low complexity. Basic and acidic residues predominate over residues 1542-1552 (QQSRPKSESMA).

In terms of assembly, interacts with TOP2B.

Its subcellular location is the cytoplasmic vesicle. The protein resides in the secretory vesicle. It is found in the acrosome. The protein is Acrosomal protein KIAA1210 of Homo sapiens (Human).